The sequence spans 343 residues: Envelope glycoprotein K (343 aa).

An N-terminal signal peptide occupies residues 1–31; that stretch reads MLLGGRTAYLSVLGLITAYAAFTIWYTLTAQ. The Extracellular segment spans residues 32–118; sequence LHNPCVYATV…VVGTRNCRAY (87 aa). Residues N57 and N89 are each glycosylated (N-linked (GlcNAc...) asparagine; by host). A helical membrane pass occupies residues 119–139; it reads LWSVQLQMITGAWLIYIAFLC. Topologically, residues 140–213 are cytoplasmic; it reads LRQERRLLGP…DPIGFLCEHS (74 aa). The helical transmembrane segment at 214–234 threads the bilayer; sequence AALALIGLEVGTHFVARLLVV. The Extracellular segment spans residues 235–251; the sequence is GTVTLVHTPCSQIYPIY. Residues 252–272 traverse the membrane as a helical segment; that stretch reads LKLASWGFVVAVTIVEIVAII. Over 273–303 the chain is Cytoplasmic; sequence YEKPPKTGSSANPPTPATHGVKGLCTSCCST. Residues 304–324 traverse the membrane as a helical segment; the sequence is VLANLCGKLVYLLLVIGAVSI. The Extracellular portion of the chain corresponds to 325-343; the sequence is LLHYEQRIQIGLLGESFSS.

Belongs to the alphaherpesvirinae glycoprotein K family. In terms of assembly, interacts (via UL20 interaction region) with protein UL20 homolog (via N-terminus); this interaction probably plays a role in the coordinate transport of protein UL20 homolog and gK to the trans-Golgi network (TGN), and is required for the cell surface expression of gK. N-glycosylated.

Its subcellular location is the host cell membrane. The protein resides in the host endosome membrane. The protein localises to the host Golgi apparatus membrane. Its function is as follows. Glycoprotein that probably modulates membrane fusion events during secondary envelopment of cytoplasmic capsids that bud into specific trans-Golgi network (TGN)-derived membranes. This Equine herpesvirus 1 (strain Ab4p) (EHV-1) protein is Envelope glycoprotein K (gK).